Here is a 251-residue protein sequence, read N- to C-terminus: Probable inactive cytidine deaminase 4 (251 aa).

61 to 63 (NVE) provides a ligand contact to substrate. Glu-76 acts as the Proton donor in catalysis. One can recognise a CMP/dCMP-type deaminase domain in the interval 136-251 (EHCSHLKCRA…VFRCHKTAEN (116 aa)).

It belongs to the cytidine and deoxycytidylate deaminase family. As to quaternary structure, homodimer.

This chain is Probable inactive cytidine deaminase 4 (CDA4), found in Arabidopsis thaliana (Mouse-ear cress).